Consider the following 113-residue polypeptide: Cell division topological specificity factor (113 aa).

Belongs to the MinE family.

Prevents the cell division inhibition by proteins MinC and MinD at internal division sites while permitting inhibition at polar sites. This ensures cell division at the proper site by restricting the formation of a division septum at the midpoint of the long axis of the cell. The sequence is that of Cell division topological specificity factor from Methylobacterium radiotolerans (strain ATCC 27329 / DSM 1819 / JCM 2831 / NBRC 15690 / NCIMB 10815 / 0-1).